The chain runs to 508 residues: Prenylcysteine oxidase 1 (508 aa).

The signal sequence occupies residues 1-31 (MDPAAPGLACSILRLGLGLLLLCSWWYPGSA). Residues N199, N291, and N356 are each glycosylated (N-linked (GlcNAc...) asparagine).

Belongs to the prenylcysteine oxidase family. FAD is required as a cofactor.

Its subcellular location is the lysosome. The catalysed reaction is an S-polyprenyl-L-cysteine + O2 + H2O = a polyprenal + L-cysteine + H2O2. It carries out the reaction S-(2E,6E)-farnesyl-L-cysteine + O2 + H2O = (2E,6E)-farnesal + L-cysteine + H2O2. The enzyme catalyses [(2E,6E,10E)-geranylgeranyl]-L-cysteine + O2 + H2O = (2E,6E,10E)-geranylgeranial + L-cysteine + H2O2. Its function is as follows. Prenylcysteine oxidase that cleaves the thioether bond of prenyl-L-cysteines, such as farnesylcysteine and geranylgeranylcysteine. Only active against free prenylcysteines and not prenylcysteine residues within prenylated proteins or peptides. Involved in the final step in the degradation of prenylated proteins, by degrading prenylcysteines after the protein has been degraded. This is Prenylcysteine oxidase 1 from Bos taurus (Bovine).